A 185-amino-acid polypeptide reads, in one-letter code: Peptidyl-tRNA hydrolase (185 aa).

Y14 contributes to the tRNA binding site. The Proton acceptor role is filled by H19. TRNA-binding residues include Y64, N66, and N112.

The protein belongs to the PTH family. In terms of assembly, monomer.

It is found in the cytoplasm. It catalyses the reaction an N-acyl-L-alpha-aminoacyl-tRNA + H2O = an N-acyl-L-amino acid + a tRNA + H(+). In terms of biological role, hydrolyzes ribosome-free peptidyl-tRNAs (with 1 or more amino acids incorporated), which drop off the ribosome during protein synthesis, or as a result of ribosome stalling. Functionally, catalyzes the release of premature peptidyl moieties from peptidyl-tRNA molecules trapped in stalled 50S ribosomal subunits, and thus maintains levels of free tRNAs and 50S ribosomes. This is Peptidyl-tRNA hydrolase from Lactiplantibacillus plantarum (strain ATCC BAA-793 / NCIMB 8826 / WCFS1) (Lactobacillus plantarum).